Consider the following 610-residue polypeptide: Elongation factor 4 (610 aa).

The tr-type G domain occupies Ser13–Lys195. Residues Asp25–Thr30 and Asn142–Asp145 each bind GTP.

It belongs to the TRAFAC class translation factor GTPase superfamily. Classic translation factor GTPase family. LepA subfamily.

Its subcellular location is the cell inner membrane. The catalysed reaction is GTP + H2O = GDP + phosphate + H(+). Its function is as follows. Required for accurate and efficient protein synthesis under certain stress conditions. May act as a fidelity factor of the translation reaction, by catalyzing a one-codon backward translocation of tRNAs on improperly translocated ribosomes. Back-translocation proceeds from a post-translocation (POST) complex to a pre-translocation (PRE) complex, thus giving elongation factor G a second chance to translocate the tRNAs correctly. Binds to ribosomes in a GTP-dependent manner. The sequence is that of Elongation factor 4 from Rhizobium johnstonii (strain DSM 114642 / LMG 32736 / 3841) (Rhizobium leguminosarum bv. viciae).